We begin with the raw amino-acid sequence, 79 residues long: Spidroin-1 (79 aa).

The protein belongs to the silk fibroin family. As to quaternary structure, major subunit, with spidroin 2, of the dragline silk.

The protein resides in the secreted. Its subcellular location is the extracellular space. Spiders' major ampullate silk possesses unique characteristics of strength and elasticity. Fibroin consists of pseudocrystalline regions of antiparallel beta-sheet interspersed with elastic amorphous segments. This Araneus bicentenarius (Giant lichen orbweaver) protein is Spidroin-1.